The chain runs to 275 residues: Phosphonoacetaldehyde hydrolase (275 aa).

Catalysis depends on Asp-15, which acts as the Nucleophile. Mg(2+)-binding residues include Asp-15 and Ala-17. Lys-56 serves as the catalytic Schiff-base intermediate with substrate. Asp-189 serves as a coordination point for Mg(2+).

This sequence belongs to the HAD-like hydrolase superfamily. PhnX family. As to quaternary structure, homodimer. It depends on Mg(2+) as a cofactor.

It carries out the reaction phosphonoacetaldehyde + H2O = acetaldehyde + phosphate + H(+). Functionally, involved in phosphonate degradation. The protein is Phosphonoacetaldehyde hydrolase of Pseudomonas putida (Arthrobacter siderocapsulatus).